The sequence spans 96 residues: Muconolactone Delta-isomerase (96 aa).

The protein belongs to the muconolactone Delta-isomerase family. Homodecamer.

The catalysed reaction is (S)-muconolactone = (4,5-dihydro-5-oxofuran-2-yl)-acetate. Its pathway is aromatic compound metabolism; beta-ketoadipate pathway; 5-oxo-4,5-dihydro-2-furylacetate from catechol: step 3/3. This chain is Muconolactone Delta-isomerase (catC), found in Pseudomonas putida (Arthrobacter siderocapsulatus).